The primary structure comprises 277 residues: Release factor glutamine methyltransferase (277 aa).

Residues Gly119–Gly123, Asp142, and Asn184 contribute to the S-adenosyl-L-methionine site. Asn184–Tyr187 is a substrate binding site.

This sequence belongs to the protein N5-glutamine methyltransferase family. PrmC subfamily.

It carries out the reaction L-glutaminyl-[peptide chain release factor] + S-adenosyl-L-methionine = N(5)-methyl-L-glutaminyl-[peptide chain release factor] + S-adenosyl-L-homocysteine + H(+). Methylates the class 1 translation termination release factors RF1/PrfA and RF2/PrfB on the glutamine residue of the universally conserved GGQ motif. The polypeptide is Release factor glutamine methyltransferase (Enterococcus faecalis (strain ATCC 700802 / V583)).